The chain runs to 334 residues: tRNA U34 carboxymethyltransferase (334 aa).

Carboxy-S-adenosyl-L-methionine contacts are provided by residues Lys-91, Trp-105, Lys-110, Gly-130, Asp-152–Thr-154, Ile-181–Glu-182, Met-196, Tyr-200, and Arg-315.

It belongs to the class I-like SAM-binding methyltransferase superfamily. CmoB family. In terms of assembly, homotetramer.

The catalysed reaction is carboxy-S-adenosyl-L-methionine + 5-hydroxyuridine(34) in tRNA = 5-carboxymethoxyuridine(34) in tRNA + S-adenosyl-L-homocysteine + H(+). In terms of biological role, catalyzes carboxymethyl transfer from carboxy-S-adenosyl-L-methionine (Cx-SAM) to 5-hydroxyuridine (ho5U) to form 5-carboxymethoxyuridine (cmo5U) at position 34 in tRNAs. The sequence is that of tRNA U34 carboxymethyltransferase from Klebsiella pneumoniae (strain 342).